Reading from the N-terminus, the 73-residue chain is Neuropeptide-like protein 29 (73 aa).

An N-terminal signal peptide occupies residues 1-22 (MISTSSILVLVVLLACFMAASA). Tyrosine amide is present on residues tyrosine 29, tyrosine 39, tyrosine 47, tyrosine 55, and tyrosine 63. Tryptophan 71 carries the tryptophan amide modification.

This sequence belongs to the YARP (YGGW-amide related peptide) family. In terms of tissue distribution, weakly or not expressed in absence of infection. Upon infection by D.coniospora, it is expressed in hypoderm. Also expressed in perivulval cells when D.coniospora spores adhere to this region. Expressed in hypodermis upon physical injury.

The protein localises to the secreted. In terms of biological role, antimicrobial peptides that have antibacterial activity against the Gram-negative bacteria S.marcescens. Has antifungal activity against D.coniospora. May play a role in response to physical injury and osmotic stress. Through the neuropeptide receptor nlp-29, induces sleep upon activation of the innate immune response to molting and injury to the adult epidermis. This chain is Neuropeptide-like protein 29, found in Caenorhabditis elegans.